Here is a 638-residue protein sequence, read N- to C-terminus: Chaperone protein DnaK (638 aa).

The residue at position 196 (threonine 196) is a Phosphothreonine; by autocatalysis. Residues alanine 592–lysine 638 are disordered. Positions glutamine 597–glutamate 610 are enriched in low complexity. The segment covering glutamate 629 to lysine 638 has biased composition (acidic residues).

Belongs to the heat shock protein 70 family.

Its function is as follows. Acts as a chaperone. The sequence is that of Chaperone protein DnaK from Chlorobaculum parvum (strain DSM 263 / NCIMB 8327) (Chlorobium vibrioforme subsp. thiosulfatophilum).